The chain runs to 388 residues: Transcription factor TB1 (388 aa).

Residues 115–173 enclose the TCP domain; sequence RKDRHSKISTAGGMRDRRMRLSLDVARKFFALQDMLGFDKASKTVQWLLNMSKAAIREI. 2 disordered regions span residues 180–269 and 289–331; these read SVCE…EKNR and AAGE…VGVS. Positions 187-201 are enriched in polar residues; sequence SSSLSVDGKQQQHSN. Basic and acidic residues-rich tracts occupy residues 210–224 and 247–269; these read GDHK…DGKK and VPDK…EKNR. The 18-residue stretch at 250 to 267 folds into the R domain; sequence KESRAKARERARERTKEK. Over residues 289 to 314 the composition is skewed to low complexity; that stretch reads AAGEDKSPTSPSNNLNHSSSTNLVST.

In terms of assembly, interacts with MADS57. In terms of tissue distribution, expressed in the axillary bud of the first formed leaf node. Expressed in axillary buds, shoot apical meristem, young leaves, vascular tissues and the tips of crown roots.

Its subcellular location is the nucleus. In terms of biological role, probable transcription factor that functions as a negative regulator of lateral branching, presumably through its expression in axillary buds. Involved in the fine tuning of shoot branching. May function as an integrator of multiple signaling pathways to regulate the development of axillary buds. Works partially downstream of strigolactones to inhibit bud outgrowth. Binds to MADS57 to suppress the negative regulation of D14 by MADS57 and balance the expression of D14 for tillering. The sequence is that of Transcription factor TB1 from Oryza sativa subsp. japonica (Rice).